Reading from the N-terminus, the 187-residue chain is BLOC-1-related complex subunit 8 homolog (187 aa).

The segment at 165-187 is disordered; it reads QSQHETANDTRQGYNDDANNDQD.

It belongs to the BORCS8 family.

It is found in the lysosome membrane. May participate in the coupling of lysosomes to microtubule plus-end-directed kinesin motor. The polypeptide is BLOC-1-related complex subunit 8 homolog (Nematostella vectensis (Starlet sea anemone)).